Reading from the N-terminus, the 995-residue chain is uncharacterized protein (995 aa).

The signal sequence occupies residues 1-30 (MFIHRMKSNLASLFLSFFLLLACEFTFSYA). Asparagine 115, asparagine 162, asparagine 225, asparagine 422, asparagine 478, and asparagine 486 each carry an N-linked (GlcNAc...) asparagine glycan. The active site involves glutamate 502. N-linked (GlcNAc...) asparagine glycans are attached at residues asparagine 546 and asparagine 611. Aspartate 669 acts as the Proton donor in catalysis. 4 N-linked (GlcNAc...) asparagine glycosylation sites follow: asparagine 670, asparagine 823, asparagine 843, and asparagine 986.

It belongs to the glycosyl hydrolase 31 family.

It is found in the spore wall. This is an uncharacterized protein from Schizosaccharomyces pombe (strain 972 / ATCC 24843) (Fission yeast).